Consider the following 336-residue polypeptide: 4-hydroxythreonine-4-phosphate dehydrogenase (336 aa).

Substrate-binding residues include His142 and Thr143. The a divalent metal cation site is built by His172, His217, and His274. Substrate is bound by residues Lys282, Asn291, and Arg300.

Belongs to the PdxA family. Homodimer. Zn(2+) is required as a cofactor. The cofactor is Mg(2+). Co(2+) serves as cofactor.

It is found in the cytoplasm. It catalyses the reaction 4-(phosphooxy)-L-threonine + NAD(+) = 3-amino-2-oxopropyl phosphate + CO2 + NADH. Its pathway is cofactor biosynthesis; pyridoxine 5'-phosphate biosynthesis; pyridoxine 5'-phosphate from D-erythrose 4-phosphate: step 4/5. In terms of biological role, catalyzes the NAD(P)-dependent oxidation of 4-(phosphooxy)-L-threonine (HTP) into 2-amino-3-oxo-4-(phosphooxy)butyric acid which spontaneously decarboxylates to form 3-amino-2-oxopropyl phosphate (AHAP). This Trichlorobacter lovleyi (strain ATCC BAA-1151 / DSM 17278 / SZ) (Geobacter lovleyi) protein is 4-hydroxythreonine-4-phosphate dehydrogenase.